A 36-amino-acid polypeptide reads, in one-letter code: Pancreatic polypeptide (36 aa).

Tyrosine 36 carries the tyrosine amide modification.

Belongs to the NPY family.

The protein localises to the secreted. In terms of biological role, hormone secreted by pancreatic cells that acts as a regulator of pancreatic and gastrointestinal functions. The chain is Pancreatic polypeptide (PPY) from Anser anser anser (Western greylag goose).